Consider the following 336-residue polypeptide: HTH-type transcriptional repressor PurR (336 aa).

Residues 2–56 (ATIKDVARLAGVSTTTVSHVINKTRFVAETTQEKVMEAVKQLNYAPSAVARSLKC) form the HTH lacI-type domain. The segment at residues 4–23 (IKDVARLAGVSTTTVSHVIN) is a DNA-binding region (H-T-H motif). Residues 48 to 56 (SAVARSLKC) mediate DNA binding. Residues Phe73, Lys189, Phe220, and Asp274 each contribute to the hypoxanthine site.

Homodimer.

Its pathway is purine metabolism; purine nucleotide biosynthesis [regulation]. Functionally, is the main repressor of the genes involved in the de novo synthesis of purine nucleotides, regulating purB, purC, purEK, purF, purHD, purL, purMN and guaBA expression. PurR is allosterically activated to bind its cognate DNA by binding the purine corepressors, hypoxanthine or guanine, thereby effecting transcription repression. In Vibrio cholerae serotype O1 (strain ATCC 39315 / El Tor Inaba N16961), this protein is HTH-type transcriptional repressor PurR.